The sequence spans 642 residues: Mini-chromosome maintenance complex-binding protein (642 aa).

Polar residues predominate over residues 151-161; it reads ARVSPSTSYTP. Residues 151–188 are disordered; it reads ARVSPSTSYTPSRHKRSYEDDEDMDLQPNKQKDQHMGA. S154 carries the phosphoserine modification. T160 carries the phosphothreonine modification. Phosphoserine occurs at positions 167 and 298.

This sequence belongs to the MCMBP family. As to quaternary structure, interacts with the MCM complex: associates with the MCM3-7 complex which lacks MCM2, while it does not interact with the MCM complex when MCM2 is present (MCM2-7 complex). Interacts with the RPA complex, when composed of all RPA1, RPA2 and RPA3 components, but not with RPA1 or RPA2 alone.

The protein resides in the nucleus. Associated component of the MCM complex that acts as a regulator of DNA replication. Binds to the MCM complex during late S phase and promotes the disassembly of the MCM complex from chromatin, thereby acting as a key regulator of pre-replication complex (pre-RC) unloading from replicated DNA. Can dissociate the MCM complex without addition of ATP; probably acts by destabilizing interactions of each individual subunits of the MCM complex. Required for sister chromatid cohesion. The chain is Mini-chromosome maintenance complex-binding protein (MCMBP) from Bos taurus (Bovine).